We begin with the raw amino-acid sequence, 863 residues long: Paramyosin (863 aa).

A nonhelical region region spans residues 1-18 (MSESHVKISRTIIRGTSP). Positions 19 to 836 (STVRLESRVR…ERTITIKRTI (818 aa)) form a coiled coil. The nonhelical region stretch occupies residues 837-863 (GGPGSRAVSVVREINSVSRGNRATSIM).

The protein belongs to the paramyosin family. Homodimer.

Its subcellular location is the cytoplasm. It localises to the myofibril. Its function is as follows. Paramyosin is a major structural component of many thick filaments isolated from invertebrate muscles. This Taenia saginata (Beef tapeworm) protein is Paramyosin (PMY).